The sequence spans 141 residues: MAKKVINVVKLQIPAGAATPAPPVGPALGQAGINIVGFTKDFNARTADQKGMIIPVVITVYEDRSFDFVTKTPPAPVLLKQAAGIQKASGEPNKNKVGSVTTAQVKEIAETKMKDLNAASIEAAMRMVEGTARSMGIEVKD.

It belongs to the universal ribosomal protein uL11 family. As to quaternary structure, part of the ribosomal stalk of the 50S ribosomal subunit. Interacts with L10 and the large rRNA to form the base of the stalk. L10 forms an elongated spine to which L12 dimers bind in a sequential fashion forming a multimeric L10(L12)X complex. In terms of processing, one or more lysine residues are methylated.

In terms of biological role, forms part of the ribosomal stalk which helps the ribosome interact with GTP-bound translation factors. The sequence is that of Large ribosomal subunit protein uL11 from Lactobacillus delbrueckii subsp. bulgaricus (strain ATCC 11842 / DSM 20081 / BCRC 10696 / JCM 1002 / NBRC 13953 / NCIMB 11778 / NCTC 12712 / WDCM 00102 / Lb 14).